Reading from the N-terminus, the 342-residue chain is Transmembrane protein 115 homolog (342 aa).

The Cytoplasmic segment spans residues 1–21; sequence MQYSSRFLELNIPDSFLNINK. The chain crosses the membrane as a helical span at residues 22–42; that stretch reads IPDATKFITVTYICLTATLFC. At 43 to 121 the chain is on the lumenal side; that stretch reads IRRSLYNKLV…NWNSSKEMFK (79 aa). N-linked (GlcNAc...) asparagine glycosylation occurs at N114. The chain crosses the membrane as a helical span at residues 122 to 142; the sequence is FIIVLGSLTNVLIIMLTLLVS. Topologically, residues 143-159 are cytoplasmic; the sequence is FFSNKVRLDIPLDGNYT. Residues 160–180 traverse the membrane as a helical segment; sequence ILIGFPIIYRQLLPETTIIHL. Over 181 to 207 the chain is Lumenal; sequence KTPQFLAKNFRFKLLPIFVMFTMTVTQ. Residues 208-228 traverse the membrane as a helical segment; sequence IIWFHHFAQLFSIWVTFFASW. The Cytoplasmic segment spans residues 229–342; sequence SYLRFFQKLA…QVLEERMVNP (114 aa).

The protein belongs to the TMEM115 family. As to quaternary structure, homooligomer.

The protein resides in the golgi apparatus membrane. Functionally, may play a role in retrograde transport of proteins from the Golgi to the endoplasmic reticulum. The protein is Transmembrane protein 115 homolog of Saccharomyces cerevisiae (strain ATCC 204508 / S288c) (Baker's yeast).